The following is a 20-amino-acid chain: Brevinin-1ITb (20 aa).

Met-8 carries the post-translational modification Methionine sulfoxide; partial. The cysteines at positions 14 and 20 are disulfide-linked.

The protein belongs to the frog skin active peptide (FSAP) family. Brevinin subfamily. As to expression, expressed by the skin glands.

The protein resides in the secreted. Its function is as follows. Antimicrobial peptide. The sequence is that of Brevinin-1ITb from Rana italica (Italian stream frog).